The chain runs to 136 residues: D-ribose pyranase (136 aa).

H20 serves as the catalytic Proton donor. Residues D28, H98, and 120–122 (YAN) each bind substrate.

It belongs to the RbsD / FucU family. RbsD subfamily. As to quaternary structure, homodecamer.

The protein resides in the cytoplasm. It catalyses the reaction beta-D-ribopyranose = beta-D-ribofuranose. It participates in carbohydrate metabolism; D-ribose degradation; D-ribose 5-phosphate from beta-D-ribopyranose: step 1/2. Catalyzes the interconversion of beta-pyran and beta-furan forms of D-ribose. The polypeptide is D-ribose pyranase (Geobacillus kaustophilus (strain HTA426)).